The chain runs to 152 residues: Small ribosomal subunit protein uS11B (152 aa).

Residues 131–152 are disordered; that stretch reads EDVTPIPSDSTRRKGGRRGRRL. The span at 143-152 shows a compositional bias: basic residues; sequence RKGGRRGRRL.

This sequence belongs to the universal ribosomal protein uS11 family.

The polypeptide is Small ribosomal subunit protein uS11B (Anopheles gambiae (African malaria mosquito)).